A 400-amino-acid polypeptide reads, in one-letter code: Probable glucan endo-1,6-beta-glucosidase B (400 aa).

Positions 1 to 17 are cleaved as a signal peptide; sequence MIRRLAALSALSGLATA. Residue Asn-30 is glycosylated (N-linked (GlcNAc...) asparagine). Residue Glu-219 is the Proton donor of the active site. Asn-272 is a glycosylation site (N-linked (GlcNAc...) asparagine). Glu-320 serves as the catalytic Nucleophile.

The protein belongs to the glycosyl hydrolase 5 (cellulase A) family.

Its subcellular location is the secreted. The enzyme catalyses Random hydrolysis of (1-&gt;6)-linkages in (1-&gt;6)-beta-D-glucans.. Functionally, beta-glucanases participate in the metabolism of beta-glucan, the main structural component of the cell wall. Acts on lutean, pustulan and 1,6-oligo-beta-D-glucosides. The polypeptide is Probable glucan endo-1,6-beta-glucosidase B (exgB) (Neosartorya fischeri (strain ATCC 1020 / DSM 3700 / CBS 544.65 / FGSC A1164 / JCM 1740 / NRRL 181 / WB 181) (Aspergillus fischerianus)).